The following is a 183-amino-acid chain: Bifunctional protein PyrR (183 aa).

Positions 100–112 match the PRPP-binding motif; that stretch reads VILVDDVLYTGRT.

It belongs to the purine/pyrimidine phosphoribosyltransferase family. PyrR subfamily.

The enzyme catalyses UMP + diphosphate = 5-phospho-alpha-D-ribose 1-diphosphate + uracil. Functionally, regulates the transcription of the pyrimidine nucleotide (pyr) operon in response to exogenous pyrimidines. Also displays a weak uracil phosphoribosyltransferase activity which is not physiologically significant. This is Bifunctional protein PyrR from Deinococcus deserti (strain DSM 17065 / CIP 109153 / LMG 22923 / VCD115).